The primary structure comprises 389 residues: 8-amino-7-oxononanoate synthase (389 aa).

A substrate-binding site is contributed by Arg31. 109–110 (GY) is a binding site for pyridoxal 5'-phosphate. His134 lines the substrate pocket. Residues Ser180, 205-208 (DEAH), and 236-239 (TLSK) each bind pyridoxal 5'-phosphate. Lys239 is modified (N6-(pyridoxal phosphate)lysine). Thr349 provides a ligand contact to substrate.

Belongs to the class-II pyridoxal-phosphate-dependent aminotransferase family. BioF subfamily. Homodimer. Pyridoxal 5'-phosphate is required as a cofactor.

The catalysed reaction is 6-carboxyhexanoyl-[ACP] + L-alanine + H(+) = (8S)-8-amino-7-oxononanoate + holo-[ACP] + CO2. It functions in the pathway cofactor biosynthesis; biotin biosynthesis. Catalyzes the decarboxylative condensation of pimeloyl-[acyl-carrier protein] and L-alanine to produce 8-amino-7-oxononanoate (AON), [acyl-carrier protein], and carbon dioxide. The chain is 8-amino-7-oxononanoate synthase from Mycobacterium marinum (strain ATCC BAA-535 / M).